The primary structure comprises 253 residues: Putative cysteine-rich repeat secretory protein 33 (253 aa).

Residues 1–28 form the signal peptide; the sequence is MFSSYSLCKCLVSFHILAIQVLISCASS. 2 consecutive Gnk2-homologous domains span residues 34–133 and 141–250; these read EYLN…MIND and YDNI…LYPF.

The protein belongs to the cysteine-rich repeat secretory protein family.

It localises to the secreted. The polypeptide is Putative cysteine-rich repeat secretory protein 33 (CRRSP33) (Arabidopsis thaliana (Mouse-ear cress)).